The primary structure comprises 339 residues: Cyclin-Y-like protein 1 (339 aa).

A Cyclin N-terminal domain is found at 181 to 263; it reads QLTAECAIVT…FLELLQFNIN (83 aa).

The protein belongs to the cyclin family. Cyclin Y subfamily.

It is found in the cell membrane. Key regulator of Wnt signaling implicated in various biological processes such as embryonic neurogenesis. The chain is Cyclin-Y-like protein 1 (ccnyl1) from Danio rerio (Zebrafish).